A 67-amino-acid chain; its full sequence is Beta-defensin 110 (67 aa).

Positions 1 to 19 (MKIQLFFFILLFWVTILPA) are cleaved as a signal peptide. 3 disulfides stabilise this stretch: Cys-35-Cys-63, Cys-42-Cys-56, and Cys-46-Cys-64.

The protein belongs to the beta-defensin family.

It localises to the secreted. Has antibacterial activity. The protein is Beta-defensin 110 (DEFB110) of Pan troglodytes (Chimpanzee).